A 154-amino-acid polypeptide reads, in one-letter code: MATFSQKPAEVVKKWVLIDAEGLVVGRLASLVANRLRGKHKATFTPHVDDGDNVIIINADKVVLTGKKYTDKKYYWHTGHPGGIKERTARQILEGRFPERVLEKAIERMIPRGPLGRRQMKNLRVNAGPNHQHEAQQPEVLDVAALNRKNKGNA.

This sequence belongs to the universal ribosomal protein uL13 family. As to quaternary structure, part of the 50S ribosomal subunit.

In terms of biological role, this protein is one of the early assembly proteins of the 50S ribosomal subunit, although it is not seen to bind rRNA by itself. It is important during the early stages of 50S assembly. The polypeptide is Large ribosomal subunit protein uL13 (Brucella abortus (strain S19)).